The following is a 207-amino-acid chain: Outer-membrane lipoprotein LolB (207 aa).

The signal sequence occupies residues 1–21 (MTLPDFRLIRLLPLASLVLTA). Cys-22 carries N-palmitoyl cysteine lipidation. The S-diacylglycerol cysteine moiety is linked to residue Cys-22.

Belongs to the LolB family. Monomer.

Its subcellular location is the cell outer membrane. In terms of biological role, plays a critical role in the incorporation of lipoproteins in the outer membrane after they are released by the LolA protein. The sequence is that of Outer-membrane lipoprotein LolB from Salmonella schwarzengrund (strain CVM19633).